The chain runs to 156 residues: ATP synthase subunit b (156 aa).

A helical transmembrane segment spans residues 3–23 (ITFTIFAQSLAFAALIWIVAT).

This sequence belongs to the ATPase B chain family. F-type ATPases have 2 components, F(1) - the catalytic core - and F(0) - the membrane proton channel. F(1) has five subunits: alpha(3), beta(3), gamma(1), delta(1), epsilon(1). F(0) has three main subunits: a(1), b(2) and c(10-14). The alpha and beta chains form an alternating ring which encloses part of the gamma chain. F(1) is attached to F(0) by a central stalk formed by the gamma and epsilon chains, while a peripheral stalk is formed by the delta and b chains.

It localises to the cell inner membrane. In terms of biological role, f(1)F(0) ATP synthase produces ATP from ADP in the presence of a proton or sodium gradient. F-type ATPases consist of two structural domains, F(1) containing the extramembraneous catalytic core and F(0) containing the membrane proton channel, linked together by a central stalk and a peripheral stalk. During catalysis, ATP synthesis in the catalytic domain of F(1) is coupled via a rotary mechanism of the central stalk subunits to proton translocation. Component of the F(0) channel, it forms part of the peripheral stalk, linking F(1) to F(0). This Xylella fastidiosa (strain 9a5c) protein is ATP synthase subunit b.